We begin with the raw amino-acid sequence, 389 residues long: Xylose isomerase (389 aa).

Active-site residues include H101 and D104. 6 residues coordinate Mg(2+): E232, E268, H271, D296, D307, and D309.

The protein belongs to the xylose isomerase family. Homotetramer. Mg(2+) is required as a cofactor.

The protein resides in the cytoplasm. The enzyme catalyses alpha-D-xylose = alpha-D-xylulofuranose. The protein is Xylose isomerase of Lactococcus lactis subsp. cremoris (strain SK11).